A 32-amino-acid chain; its full sequence is ilv operon leader peptide (32 aa).

This is ilv operon leader peptide (ilvL) from Edwardsiella tarda.